We begin with the raw amino-acid sequence, 283 residues long: Daunorubicin resistance ABC transporter permease protein DrrB1 (283 aa).

The ABC transmembrane type-2 domain occupies 53–280 (VQLIDIVLMP…PLTMRLYRNK (228 aa)). The next 6 helical transmembrane spans lie at 58-78 (IVLM…GAFA), 85-105 (LQFY…VYTG), 150-170 (VFLG…VVGA), 171-191 (MLVL…LGVV), 198-218 (VSGT…IFVM), and 252-272 (FWDV…FAPL).

It belongs to the ABC-2 integral membrane protein family. The complex is probably composed of two ATP-binding proteins (DrrA1) and two transmembrane proteins (DrrB1).

The protein localises to the cell membrane. Functionally, part of the ABC transporter complex DrrA1B1 involved in daunorubicin efflux. Responsible for the translocation of the substrate across the membrane. Confers self-resistance to daunorubicin, an antibiotic produced by S.coeruleorubidus. This chain is Daunorubicin resistance ABC transporter permease protein DrrB1, found in Streptomyces coeruleorubidus.